The chain runs to 298 residues: Leucine-rich repeat-containing protein 55 (298 aa).

The N-terminal stretch at 1 to 34 is a signal peptide; the sequence is MGDTWAQLPWPGPPHSALLLVFFLLAAGVMHSDA. The region spanning 35 to 65 is the LRRNT domain; that stretch reads GTSCPVLCTCRNQVVDCSNQRLFSVPPDLPM. 2 disulfide bridges follow: C38–C44 and C42–C51. LRR repeat units lie at residues 66–87, 90–111, 114–135, 138–160, and 163–186; these read DTRN…YLTC, ELRV…LFLH, RLAH…MFRE, GLVH…AFQG, and HLRD…EGLP. Residues 196–251 enclose the LRRCT domain; that stretch reads NPWVCGCTMEPLLKWLRNRIQRCTADSQLAECRGPPEVEGAPLFSLTEESFKACHL. 2 cysteine pairs are disulfide-bonded: C200/C227 and C202/C249. The chain crosses the membrane as a helical span at residues 259–279; that stretch reads LFIAFVGFVVSIASVATNFLL.

Interacts with KCNMA1.

It is found in the cell membrane. Auxiliary protein of the large-conductance, voltage and calcium-activated potassium channel (BK alpha). Modulates gating properties by producing a marked shift in the BK channel's voltage dependence of activation in the hyperpolarizing direction, and in the absence of calcium. The protein is Leucine-rich repeat-containing protein 55 (Lrrc55) of Mus musculus (Mouse).